The primary structure comprises 1377 residues: DNA-directed RNA polymerase subunit beta (1377 aa).

It belongs to the RNA polymerase beta chain family. The RNAP catalytic core consists of 2 alpha, 1 beta, 1 beta' and 1 omega subunit. When a sigma factor is associated with the core the holoenzyme is formed, which can initiate transcription.

The catalysed reaction is RNA(n) + a ribonucleoside 5'-triphosphate = RNA(n+1) + diphosphate. Functionally, DNA-dependent RNA polymerase catalyzes the transcription of DNA into RNA using the four ribonucleoside triphosphates as substrates. This chain is DNA-directed RNA polymerase subunit beta, found in Cereibacter sphaeroides (strain ATCC 17029 / ATH 2.4.9) (Rhodobacter sphaeroides).